Here is a 545-residue protein sequence, read N- to C-terminus: Probable target of rapamycin complex 2 subunit BIT2 (545 aa).

2 disordered regions span residues 1-24 (MATDLNRKRSATSGSLSVTNPNIK) and 78-166 (DGSN…GTSS). Polar residues-rich tracts occupy residues 11–24 (ATSGSLSVTNPNIK), 106–130 (IGSSSSNRMEGNTTSNDSLFSSNSR), and 151–166 (RSGSKNYGTVITGTSS).

Interacts with the target of rapamycin complex 2 (TORC2) subunit TSC11 and the TORC2 effectors SLM1 and SLM2.

In Saccharomyces cerevisiae (strain ATCC 204508 / S288c) (Baker's yeast), this protein is Probable target of rapamycin complex 2 subunit BIT2 (BIT2).